A 119-amino-acid chain; its full sequence is Beta-2-microglobulin (119 aa).

An N-terminal signal peptide occupies residues 1 to 20 (MARFVVAALLVLLSLSGLEA). The Ig-like C1-type domain maps to 25–114 (PKIQVYSRHP…MTFPAPKTVK (90 aa)). An intrachain disulfide couples cysteine 45 to cysteine 100.

This sequence belongs to the beta-2-microglobulin family. In terms of assembly, heterodimer of an alpha chain and a beta chain. Beta-2-microglobulin is the beta-chain of major histocompatibility complex class I molecules.

The protein resides in the secreted. Its function is as follows. Component of the class I major histocompatibility complex (MHC). Involved in the presentation of peptide antigens to the immune system. The protein is Beta-2-microglobulin (B2M) of Pithecia irrorata (Gray monk saki).